The following is a 785-amino-acid chain: Probable cationic amino acid transporter (785 aa).

15 consecutive transmembrane segments (helical) span residues 58–78 (LVSLGVGSCVGTGMYVVSGLV), 83–103 (AGPGVIVSFIIAAVASILSGV), 119–141 (AYTYSYVTVGEFVAFFIGWNLIL), 187–207 (YPDILALVIGILVTVIVALGV), 216–236 (VLNVINLVVWVFIMIAGLFFV), 251–271 (WSGVMQGAATCFYAFIGFDII), 291–311 (ASLVTCLTAYVSVSVILTLMV), 337–357 (IVAIGSIAGLTVSLLGSLFPM), 360–380 (VIYAMAGDGLLFRFLAHVSTY), 384–404 (PAVACVVSGFLSALLALLVSL), 407–427 (LIEMMSIGTLLAYTLVSVCVL), 568–588 (CVVLLFILIFCFCSLIIFGSG), 596–616 (WAVLLLVVLLLVLTLLVFIII), 628–648 (MAPCVPFVPASAMLVNVYLML), and 655–675 (WIRFGVWCFVGVLIYFGYGMW). The segment at 715–785 (DQGPFQNWGK…VDDDLDDPLE (71 aa)) is disordered. The span at 727-740 (QQKQPQQEQSEPQS) shows a compositional bias: low complexity. Positions 775 to 785 (VVDDDLDDPLE) are enriched in acidic residues.

Belongs to the amino acid-polyamine-organocation (APC) superfamily.

The protein resides in the lysosome membrane. Its function is as follows. May be involved in arginine transport. The protein is Probable cationic amino acid transporter (slc7a14a) of Danio rerio (Zebrafish).